A 396-amino-acid chain; its full sequence is MDLKFKVHFALVLLFLAHFGESQTGVFDITKYGANSNADISEALLNAFKEACQSTSPSTIVIPKGTFTMNQVKLEGPCKSPLELQIQATLKAPSDPSQLKVGEWLTVNKLDQFTMSGGGILDGQAAAAWECKQSKKCNKLPNNLSFNSLTNSTIKDITTLDSKSFHVNVNQCKNLTFIRFNVSAPANSPNTDGIHVSRSSSVNITDSNFSTGDDCISVGDETEQLYITRVTCGPGHGISVGSLGGNPDEKPVVGVFVRNCTFTNTDNGVRIKTWPASHPGVVNDVHFEDIIVQNVSNPVVIDQVYCPFNKCNKDLPSQVKISKVSFQNIKGTSRTQDAVSLLRSKGVPCEGIEVGDIDITYSGKEGPAKSSCENIKPSLKGKQNPPVCTASAASSS.

The N-terminal stretch at 1-22 (MDLKFKVHFALVLLFLAHFGES) is a signal peptide. Asparagine 143, asparagine 151, asparagine 174, asparagine 181, asparagine 203, and asparagine 208 each carry an N-linked (GlcNAc...) asparagine glycan. PbH1 repeat units lie at residues 172–198 (CKNL…HVSR) and 199–220 (SSSV…SVGD). Catalysis depends on aspartate 213, which acts as the Proton donor. An intrachain disulfide couples cysteine 215 to cysteine 232. Residue histidine 236 is part of the active site. PbH1 repeat units follow at residues 252–273 (VVGV…RIKT), 282–303 (VNDV…VIDQ), and 316–356 (PSQV…EVGD). Asparagine 259 and asparagine 294 each carry an N-linked (GlcNAc...) asparagine glycan. The segment at 364–396 (KEGPAKSSCENIKPSLKGKQNPPVCTASAASSS) is disordered. Residues cysteine 372 and cysteine 388 are joined by a disulfide bond.

The protein belongs to the glycosyl hydrolase 28 family. Pollen.

Its subcellular location is the secreted. It is found in the cell wall. It carries out the reaction (1,4-alpha-D-galacturonosyl)n+m + H2O = (1,4-alpha-D-galacturonosyl)n + (1,4-alpha-D-galacturonosyl)m.. Its function is as follows. May function in depolymerizing pectin during pollen development, germination, and tube growth. This Nicotiana tabacum (Common tobacco) protein is Polygalacturonase (PG1).